A 327-amino-acid chain; its full sequence is Ornithine carbamoyltransferase, mitochondrial (327 aa).

Carbamoyl phosphate is bound by residues 63–66 (STRT), Arg-114, His-141, and Gln-144. Residues Asn-172, Asp-236, Ser-240, and Met-241 each coordinate L-ornithine. Cys-276 (proton acceptor) is an active-site residue. Residues 276–277 (CL) and Arg-303 each bind carbamoyl phosphate.

It belongs to the aspartate/ornithine carbamoyltransferase superfamily. OTCase family. Interacts with trx2.

It is found in the mitochondrion matrix. The catalysed reaction is carbamoyl phosphate + L-ornithine = L-citrulline + phosphate + H(+). It functions in the pathway amino-acid biosynthesis; L-arginine biosynthesis; L-arginine from L-ornithine and carbamoyl phosphate: step 1/3. Functionally, ornithine carbamoyltransferase involved in the synthesis of arginine from glutamate via ornithine and the urea cycle. The protein is Ornithine carbamoyltransferase, mitochondrial (arg3) of Schizosaccharomyces pombe (strain 972 / ATCC 24843) (Fission yeast).